The chain runs to 86 residues: BaSO(4)-adsorbing protein 1 (86 aa).

Disulfide bonds link cysteine 6/cysteine 22, cysteine 18/cysteine 49, and cysteine 39/cysteine 54. The interval 58–86 (GDSASNTQNQGGSRRQENEDQGDDEWDRK) is disordered. The segment covering 59–70 (DSASNTQNQGGS) has biased composition (polar residues). A compositionally biased stretch (acidic residues) spans 76–86 (EDQGDDEWDRK).

As to expression, salivary gland (at protein level).

It localises to the secreted. Its function is as follows. Inhibits lectin and classical pathways of complement system activation in the host with no significant effect on the alternative pathway. Inhibits host extrinsic blood coagulation pathway but not the intrinsic cascade. Binds to neutral and negatively charged membranes in vitro; binding is reduced upon pre-incubation with Ca(2+). The chain is BaSO(4)-adsorbing protein 1 from Ornithodoros savignyi (African eyed tampan).